Consider the following 306-residue polypeptide: MNGILIVDKPQGMTSHAVVGRIRRLFGLRKVGHAGTLDPLATGVLVVALGQATRILQFLMQENKVYRASLVLGKTTDTQDSEGQIVATSDPGHIDAQSVADVCHSMVGSYDQMPPMYSALKKDGVPLYKLARQGVEVSRKPRRITIFDLQLLAVEPPNITFDVHCSKGTYVRTICHDIGVKLGCGAHLTALRRLRSAPFDVKEAVTLEAIELMAPEDRPELLLSIAEALREYPSLNVCPEGIKRLGYGIPPTADMIADTIDFEEGTQVLLVGPGGALAMATYVPSRARESRGDFELLRVFNDGGSS.

The Nucleophile role is filled by aspartate 38.

It belongs to the pseudouridine synthase TruB family. Type 1 subfamily.

The catalysed reaction is uridine(55) in tRNA = pseudouridine(55) in tRNA. Functionally, responsible for synthesis of pseudouridine from uracil-55 in the psi GC loop of transfer RNAs. This Syntrophotalea carbinolica (strain DSM 2380 / NBRC 103641 / GraBd1) (Pelobacter carbinolicus) protein is tRNA pseudouridine synthase B.